A 319-amino-acid polypeptide reads, in one-letter code: Ankyrin repeat domain-containing protein 1 (319 aa).

The segment at Lys-46–Leu-65 is disordered. A coiled-coil region spans residues Val-53 to Ile-89. The segment covering Gln-55–Leu-65 has biased composition (basic and acidic residues). 5 ANK repeats span residues Tyr-152 to Phe-181, Leu-185 to Ala-214, Leu-218 to Ala-247, Glu-251 to Val-280, and Ala-284 to Arg-315.

As to quaternary structure, interacts with TTN/titin and YBX1. Expressed in heart, cardiac muscle.

The protein resides in the nucleus. Its function is as follows. May play an important role in endothelial cell activation. May act as a nuclear transcription factor that negatively regulates the expression of cardiac genes. The sequence is that of Ankyrin repeat domain-containing protein 1 (Ankrd1) from Mus musculus (Mouse).